A 294-amino-acid chain; its full sequence is MSWLEKIFNTSNIVSSRKASIPEGVWTKCTSCEQVLYSAELERNLEVCPKCDHHMRMKARKRLETFLDAEGRVEIGAELEPKDVLKFKDSKRYKDRISAAQKSSDETDALVVMKGTLLELPVVACAFEFSFMGGSMGSVVGARFVKAVDAAIENNCPLVCFSASGGARMQEALMSLMQMAKTSAALARLSRKGLPFFSVLTDPTMGGVSASLAMLGDINIGEPKALIGFAGRRVIEQTVREDLPEGFQRSEFLLEHGAIDMIVDRREMRQRIGGLMAKMTNQESPLVVPVDGSH.

Positions 25 to 294 constitute a CoA carboxyltransferase N-terminal domain; it reads VWTKCTSCEQ…PLVVPVDGSH (270 aa). Zn(2+) contacts are provided by C29, C32, C48, and C51. The C4-type zinc-finger motif lies at 29–51; sequence CTSCEQVLYSAELERNLEVCPKC.

Belongs to the AccD/PCCB family. In terms of assembly, acetyl-CoA carboxylase is a heterohexamer composed of biotin carboxyl carrier protein (AccB), biotin carboxylase (AccC) and two subunits each of ACCase subunit alpha (AccA) and ACCase subunit beta (AccD). Zn(2+) is required as a cofactor.

It is found in the cytoplasm. It catalyses the reaction N(6)-carboxybiotinyl-L-lysyl-[protein] + acetyl-CoA = N(6)-biotinyl-L-lysyl-[protein] + malonyl-CoA. Its pathway is lipid metabolism; malonyl-CoA biosynthesis; malonyl-CoA from acetyl-CoA: step 1/1. In terms of biological role, component of the acetyl coenzyme A carboxylase (ACC) complex. Biotin carboxylase (BC) catalyzes the carboxylation of biotin on its carrier protein (BCCP) and then the CO(2) group is transferred by the transcarboxylase to acetyl-CoA to form malonyl-CoA. The sequence is that of Acetyl-coenzyme A carboxylase carboxyl transferase subunit beta from Aliivibrio fischeri (strain MJ11) (Vibrio fischeri).